We begin with the raw amino-acid sequence, 206 residues long: Pyridoxal 5'-phosphate synthase subunit PdxT (206 aa).

Position 59–61 (glycine 59–serine 61) interacts with L-glutamine. Cysteine 91 serves as the catalytic Nucleophile. Residues arginine 123 and isoleucine 151–arginine 152 each bind L-glutamine. Active-site charge relay system residues include histidine 187 and glutamate 189.

This sequence belongs to the glutaminase PdxT/SNO family. In the presence of PdxS, forms a dodecamer of heterodimers. Only shows activity in the heterodimer.

The enzyme catalyses aldehydo-D-ribose 5-phosphate + D-glyceraldehyde 3-phosphate + L-glutamine = pyridoxal 5'-phosphate + L-glutamate + phosphate + 3 H2O + H(+). It carries out the reaction L-glutamine + H2O = L-glutamate + NH4(+). It functions in the pathway cofactor biosynthesis; pyridoxal 5'-phosphate biosynthesis. Functionally, catalyzes the hydrolysis of glutamine to glutamate and ammonia as part of the biosynthesis of pyridoxal 5'-phosphate. The resulting ammonia molecule is channeled to the active site of PdxS. The protein is Pyridoxal 5'-phosphate synthase subunit PdxT of Mycobacterium sp. (strain KMS).